Reading from the N-terminus, the 214-residue chain is tRNA (guanine-N(7)-)-methyltransferase (214 aa).

4 residues coordinate S-adenosyl-L-methionine: Glu-43, Glu-68, Asp-95, and Asp-117. Residue Asp-117 is part of the active site. Residues Lys-121, Asp-153, and 191–194 (TEYE) contribute to the substrate site.

This sequence belongs to the class I-like SAM-binding methyltransferase superfamily. TrmB family.

The catalysed reaction is guanosine(46) in tRNA + S-adenosyl-L-methionine = N(7)-methylguanosine(46) in tRNA + S-adenosyl-L-homocysteine. Its pathway is tRNA modification; N(7)-methylguanine-tRNA biosynthesis. Functionally, catalyzes the formation of N(7)-methylguanine at position 46 (m7G46) in tRNA. This is tRNA (guanine-N(7)-)-methyltransferase from Brevibacillus brevis (strain 47 / JCM 6285 / NBRC 100599).